The chain runs to 66 residues: Large ribosomal subunit protein bL31 (66 aa).

Zn(2+)-binding residues include C16, C18, C36, and C39.

It belongs to the bacterial ribosomal protein bL31 family. Type A subfamily. As to quaternary structure, part of the 50S ribosomal subunit. It depends on Zn(2+) as a cofactor.

In terms of biological role, binds the 23S rRNA. The protein is Large ribosomal subunit protein bL31 of Campylobacter fetus subsp. fetus (strain 82-40).